The sequence spans 1289 residues: MNRTVSTLSSTVSDVSVEIPSICNVINTELPTSDVYLYTLKLILLDYINEPRFKEAALLSNRTGTSRVLSDKTNHQQTQHGKKLVVDKQDDMSERDIVQATLRILKGKLAQISGNKNLAPNEMHWKSIVKMYYSMLDSSSADTFSKMGQMEEVVGYFTNIASNELKKMTIKNSRDELFSEVAYFIDLVIDVLPDSCANIIKRLLDYKINLKKGETTVKKKRAASPATVPQYRSISGSTISNKQPSFKVQDISHMKYFMQLFETDETKLHQDVMAVKDDCTNPIFCGELRYLRKKIKKDNGTLTASDFSSDREYNLWKNYELLEIANLMDRFEIGEKVTSHGNRLIPKDAKSVFVRLIGLVLKKECSNAVNAINLSQEALFFFHKSARYWRIEYPSTISSLVYSAANLSVLGDEELNIPITENLFSVIRNKYLCSEDNLDPSAWNAQDRYLWAANLFHTTDQSMRTINNLLTAIFSGTKPKFSPVLSFYYSNIVGDPVMEFYETQSVAVKKYWIKLFKKTLFKASEDYFVSLLQDMLKANAIEIQNVQNLVETIIEAIKAIQKRYNKPLLDEISLPRQCAVFLCEVYGSDSLNLIKTAEKSTMKMTGQKLGPIDALDMYDVLKELRQIYLQVKPKGKFFFNLENYFIKYLTRLCDDVSRNVQKVIKSSLESENWQPVNDQDHFSRSVLDIFKMINESTSMLEKFGWQNEFQLAQMITVILKAFSDGMLSYSAQLMELIQRDLQEGDEPSYSLESSDTRSSLSLNNANVNHEKSRSSRLFEDLKNVVKSTPKMVAPAPYQFKKRTCVLLNDLDKTLFLLESFEEKADPSKISSVIAQYHSSHNLEDNGKSFDDQNMKQVYTLRIIGAENIKGFSKTGLSNTYVSMRNITLQREIGTTKIVARSITPKWDEEFVFESPFGKSNDIMFTIWHHPHSRLKNLAEDDLCGKANMKFTPRKLKDDGFPIDFSLTLNPQGTLYCQISLESEKIDAVSSMGRIYRSFSRSRDRAINLIVNKFSDFIAFAFSRTTLKTVCGHHGSALASDEAVYDAILPLFDYLNANLNILASELSQRLLFMVMLRAWNLVLENADLLLLPALNSAKVNILRSAKKSLWENTLSTTKTVSGYGRPLTQAEIEAVFKWLDALCVDFFHNKGEGPPLAELKNEYYQNILLIPAFYDKSVSELKDEVQRLIPLYEEYLRWFYLKKTPITFTNKSAGTISRKKSLVANIVKEPKEQLERDAEVMNIILRILIAKGQHDYVHRILHDRKELVNTMKNRRAVSRAVTPTGKKGRN.

Residues 615–733 enclose the MHD1 domain; that stretch reads LDMYDVLKEL…DGMLSYSAQL (119 aa). Residues 745–774 form a disordered region; the sequence is DEPSYSLESSDTRSSLSLNNANVNHEKSRS. Residues 748-762 are compositionally biased toward low complexity; sequence SYSLESSDTRSSLSL. The C2 domain maps to 834 to 966; it reads AQYHSSHNLE…DDGFPIDFSL (133 aa). Residues 1044–1184 enclose the MHD2 domain; sequence YDAILPLFDY…KSVSELKDEV (141 aa).

The protein localises to the cytoplasm. This is an uncharacterized protein from Saccharomyces cerevisiae (strain ATCC 204508 / S288c) (Baker's yeast).